Reading from the N-terminus, the 207-residue chain is Ribosome maturation factor RimP (207 aa).

The disordered stretch occupies residues 171-207 (RAPGGAPEEGEEDTTEAAPEGAGKSPKPGRRPARKTH). Basic residues predominate over residues 197–207 (KPGRRPARKTH).

Belongs to the RimP family.

The protein resides in the cytoplasm. Functionally, required for maturation of 30S ribosomal subunits. The polypeptide is Ribosome maturation factor RimP (Gluconacetobacter diazotrophicus (strain ATCC 49037 / DSM 5601 / CCUG 37298 / CIP 103539 / LMG 7603 / PAl5)).